A 738-amino-acid chain; its full sequence is NADH dehydrogenase [ubiquinone] iron-sulfur protein 1, mitochondrial (738 aa).

The N-terminal 27 residues, 1–27, are a transit peptide targeting the mitochondrion; it reads MGLGLLASRALRSSRIIRNSTRTIVST. Residues 66–144 enclose the 2Fe-2S ferredoxin-type domain; sequence DVIEVFVDGY…GMKIKTDTPI (79 aa). Residues Cys-100, Cys-111, Cys-114, and Cys-128 each coordinate [2Fe-2S] cluster. A 4Fe-4S His(Cys)3-ligated-type domain is found at 144-183; it reads IAKKAREGVMEFLLMNHPLDCPICDQGGECDLQDQSMAFG. [4Fe-4S] cluster-binding residues include His-160, Cys-164, Cys-167, Cys-173, Cys-212, Cys-215, Cys-218, and Cys-262. Residues 281–337 enclose the 4Fe-4S Mo/W bis-MGD-type domain; the sequence is LKGTESIDVTDAVGSNIRIDSRGPEVMRVVPRLNEDINEEWISDKTRFFYDGLKRQR.

Belongs to the complex I 75 kDa subunit family. As to quaternary structure, complex I is composed of about 45 different subunits. This is a component of the iron-sulfur (IP) fragment of the enzyme. It depends on [2Fe-2S] cluster as a cofactor. [4Fe-4S] cluster serves as cofactor.

It localises to the mitochondrion inner membrane. It catalyses the reaction a ubiquinone + NADH + 5 H(+)(in) = a ubiquinol + NAD(+) + 4 H(+)(out). Core subunit of the mitochondrial membrane respiratory chain NADH dehydrogenase (Complex I) that is believed to belong to the minimal assembly required for catalysis. Complex I functions in the transfer of electrons from NADH to the respiratory chain. The immediate electron acceptor for the enzyme is believed to be ubiquinone. This is the largest subunit of complex I and it is a component of the iron-sulfur (IP) fragment of the enzyme. It may form part of the active site crevice where NADH is oxidized. This Solanum tuberosum (Potato) protein is NADH dehydrogenase [ubiquinone] iron-sulfur protein 1, mitochondrial.